A 214-amino-acid chain; its full sequence is Protein FAM167A (214 aa).

2 disordered regions span residues 1-26 (MSVPQIHVEEVGAEEGAGAAAPPDDH) and 59-108 (PFPR…LSTG). Residues 118 to 156 (EAIAWLRKELTEMRLQDQQLARQLMRLRGDINKLKIEHT) are a coiled coil.

It belongs to the FAM167 (SEC) family. Expressed in skin, including primary keratinocytes, spleen, kidney, leukocytes, testis, lung, small intestine and prostate.

This chain is Protein FAM167A (FAM167A), found in Homo sapiens (Human).